Reading from the N-terminus, the 100-residue chain is NADH-quinone oxidoreductase subunit K (100 aa).

The next 3 helical transmembrane spans lie at 4–24 (LQHGLILAAILFVLGLTGLII), 28–48 (LLFMLISLEVMINAAALAFVV), and 60–80 (VMYILAITLAAAEASIGLALL).

This sequence belongs to the complex I subunit 4L family. In terms of assembly, NDH-1 is composed of 13 different subunits. Subunits NuoA, H, J, K, L, M, N constitute the membrane sector of the complex.

The protein localises to the cell inner membrane. It catalyses the reaction a quinone + NADH + 5 H(+)(in) = a quinol + NAD(+) + 4 H(+)(out). Its function is as follows. NDH-1 shuttles electrons from NADH, via FMN and iron-sulfur (Fe-S) centers, to quinones in the respiratory chain. The immediate electron acceptor for the enzyme in this species is believed to be ubiquinone. Couples the redox reaction to proton translocation (for every two electrons transferred, four hydrogen ions are translocated across the cytoplasmic membrane), and thus conserves the redox energy in a proton gradient. The chain is NADH-quinone oxidoreductase subunit K from Yersinia enterocolitica serotype O:8 / biotype 1B (strain NCTC 13174 / 8081).